The sequence spans 208 residues: V-type ATP synthase subunit E (208 aa).

It belongs to the V-ATPase E subunit family.

Its function is as follows. Produces ATP from ADP in the presence of a proton gradient across the membrane. The chain is V-type ATP synthase subunit E (atpE) from Chlamydia muridarum (strain MoPn / Nigg).